A 227-amino-acid polypeptide reads, in one-letter code: Ubiquitin domain-containing protein 1 (227 aa).

A disordered region spans residues 1–35 (MGNCVGRQRRERPAAPGHPRKRAGRNEPLKKERLK). Positions 24–35 (GRNEPLKKERLK) are enriched in basic and acidic residues. Positions 149–224 (FPLKVRLSTG…IQVIINQPPP (76 aa)) constitute a Ubiquitin-like domain.

Interacts with UBTD1.

In terms of biological role, may be involved in the regulation of cellular senescence through a positive feedback loop with TP53. Is a TP53 downstream target gene that increases the stability of TP53 protein by promoting the ubiquitination and degradation of MDM2. The polypeptide is Ubiquitin domain-containing protein 1 (UBTD1) (Homo sapiens (Human)).